The primary structure comprises 387 residues: Monomeric sarcosine oxidase (387 aa).

6–36 (DVIVVGAGSMGMAAGYYLAKQGVKTLLVDSF) contacts FAD. C316 is subject to S-8alpha-FAD cysteine.

The protein belongs to the MSOX/MTOX family. MSOX subfamily. In terms of assembly, monomer. FAD is required as a cofactor.

Its subcellular location is the cytoplasm. It catalyses the reaction sarcosine + O2 + H2O = formaldehyde + glycine + H2O2. Its function is as follows. Catalyzes the oxidative demethylation of sarcosine. This Bacillus sp. (strain NS-129) protein is Monomeric sarcosine oxidase (soxA).